We begin with the raw amino-acid sequence, 243 residues long: 2-C-methyl-D-erythritol 4-phosphate cytidylyltransferase (243 aa).

This sequence belongs to the IspD/TarI cytidylyltransferase family. IspD subfamily.

The catalysed reaction is 2-C-methyl-D-erythritol 4-phosphate + CTP + H(+) = 4-CDP-2-C-methyl-D-erythritol + diphosphate. The protein operates within isoprenoid biosynthesis; isopentenyl diphosphate biosynthesis via DXP pathway; isopentenyl diphosphate from 1-deoxy-D-xylulose 5-phosphate: step 2/6. Catalyzes the formation of 4-diphosphocytidyl-2-C-methyl-D-erythritol from CTP and 2-C-methyl-D-erythritol 4-phosphate (MEP). This is 2-C-methyl-D-erythritol 4-phosphate cytidylyltransferase from Rhodopirellula baltica (strain DSM 10527 / NCIMB 13988 / SH1).